Reading from the N-terminus, the 333-residue chain is HTH-type transcriptional repressor PurR (333 aa).

Residues 2-56 (ATIKDVAKLASVSTTTVSHVINKTRFVAEATQKRVWEAVEELNYAPSAVARSLKC) enclose the HTH lacI-type domain. The H-T-H motif DNA-binding region spans 4-23 (IKDVAKLASVSTTTVSHVIN). A DNA-binding region spans residues 48-56 (SAVARSLKC). Hypoxanthine is bound by residues F73, K189, T191, F220, and D274.

As to quaternary structure, homodimer.

It functions in the pathway purine metabolism; purine nucleotide biosynthesis [regulation]. Functionally, is the main repressor of the genes involved in the de novo synthesis of purine nucleotides, regulating purB, purC, purEK, purF, purHD, purL, purMN and guaBA expression. PurR is allosterically activated to bind its cognate DNA by binding the purine corepressors, hypoxanthine or guanine, thereby effecting transcription repression. The protein is HTH-type transcriptional repressor PurR of Aliivibrio salmonicida (strain LFI1238) (Vibrio salmonicida (strain LFI1238)).